Consider the following 350-residue polypeptide: L-serine dehydratase (350 aa).

Position 62 is an N6-(pyridoxal phosphate)lysine (K62).

The protein belongs to the serine/threonine dehydratase family. It depends on pyridoxal 5'-phosphate as a cofactor.

The protein resides in the cytoplasm. The catalysed reaction is L-serine = pyruvate + NH4(+). Its pathway is carbohydrate biosynthesis; gluconeogenesis. The chain is L-serine dehydratase (sds) from Dictyostelium discoideum (Social amoeba).